An 809-amino-acid polypeptide reads, in one-letter code: MANPKLTRVLSTRDRVQDTLSAHRNELVALLSRYVDQGKGILQPHNLIDELESVIGDDETKKSLSDGPFGEILKSAMEAIVVPPFVALAVRPRPGVWEYVRVNVFELSVEQLTVSEYLRFKEELVDGPNSDPFCLELDFEPFNANVPRPSRSSSIGNGVQFLNRHLSSVMFRNKDCLEPLLDFLRVHKYKGHPLMLNDRIQSISRLQIQLSKAEDHISKLSQETPFSEFEYALQGMGFEKGWGDTAGRVLEMMHLLSDILQAPDPSSLEKFLGMVPMVFNVVILSPHGYFGQANVLGLPDTGGQVVYILDQVRALETEMLLRIKRQGLDISPSILIVTRLIPDAKGTTCNQRLERVSGTEHTHILRVPFRSEKGILRKWISRFDVWPYLENYAQDAASEIVGELQGVPDFIIGNYSDGNLVASLMAHRMGVTQCTIAHALEKTKYPDSDIYWKDFDNKYHFSCQFTADLIAMNNADFIITSTYQEIAGTKNTVGQYESHGAFTLPGLYRVVHGIDVFDPKFNIVSPGADMTIYFPYSEETRRLTALHGSIEEMLYSPDQTDEHVGTLSDRSKPILFSMARLDKVKNISGLVEMYSKNTKLRELVNLVVIAGNIDVNKSKDREEIVEIEKMHNLMKNYKLDGQFRWITAQTNRARNGELYRYIADTRGAFAQPAFYEAFGLTVVEAMTCGLPTFATCHGGPAEIIEHGLSGFHIDPYHPEQAGNIMADFFERCKEDPNHWKKVSDAGLQRIYERYTWKIYSERLMTLAGVYGFWKYVSKLERRETRRYLEMFYILKFRDLVKTVPSTADD.

Residues 277 to 755 (MVFNVVILSP…GLQRIYERYT (479 aa)) form a GT-B glycosyltransferase region.

This sequence belongs to the glycosyltransferase 1 family. Plant sucrose synthase subfamily. In terms of tissue distribution, detected in the whole plant with highest expression in developing siliques, vasculature of cotyledons and stomatal guard cells. Also detected throughout the mature parts of the root but not in the expanding zone.

It catalyses the reaction an NDP-alpha-D-glucose + D-fructose = a ribonucleoside 5'-diphosphate + sucrose + H(+). Sucrose-cleaving enzyme that provides UDP-glucose and fructose for various metabolic pathways. Modulates metabolic homeostasis and direct carbon towards starch synthesis in developing seeds. In Arabidopsis thaliana (Mouse-ear cress), this protein is Sucrose synthase 3 (SUS3).